A 227-amino-acid chain; its full sequence is Phosphoribosylformylglycinamidine synthase subunit PurQ (227 aa).

Residues 3-225 (FAVIVFPGSN…LKQWRETYVV (223 aa)) form the Glutamine amidotransferase type-1 domain. The active-site Nucleophile is cysteine 86. Residues histidine 194 and glutamate 196 contribute to the active site.

As to quaternary structure, part of the FGAM synthase complex composed of 1 PurL, 1 PurQ and 2 PurS subunits.

It localises to the cytoplasm. The catalysed reaction is N(2)-formyl-N(1)-(5-phospho-beta-D-ribosyl)glycinamide + L-glutamine + ATP + H2O = 2-formamido-N(1)-(5-O-phospho-beta-D-ribosyl)acetamidine + L-glutamate + ADP + phosphate + H(+). It carries out the reaction L-glutamine + H2O = L-glutamate + NH4(+). The protein operates within purine metabolism; IMP biosynthesis via de novo pathway; 5-amino-1-(5-phospho-D-ribosyl)imidazole from N(2)-formyl-N(1)-(5-phospho-D-ribosyl)glycinamide: step 1/2. Its function is as follows. Part of the phosphoribosylformylglycinamidine synthase complex involved in the purines biosynthetic pathway. Catalyzes the ATP-dependent conversion of formylglycinamide ribonucleotide (FGAR) and glutamine to yield formylglycinamidine ribonucleotide (FGAM) and glutamate. The FGAM synthase complex is composed of three subunits. PurQ produces an ammonia molecule by converting glutamine to glutamate. PurL transfers the ammonia molecule to FGAR to form FGAM in an ATP-dependent manner. PurS interacts with PurQ and PurL and is thought to assist in the transfer of the ammonia molecule from PurQ to PurL. The chain is Phosphoribosylformylglycinamidine synthase subunit PurQ from Bacillus anthracis (strain A0248).